We begin with the raw amino-acid sequence, 322 residues long: Probable heme-iron transport system permease protein IsdF (322 aa).

Transmembrane regions (helical) follow at residues 9–29, 61–81, 89–109, 114–134, 143–163, 179–199, 233–253, 267–287, and 294–314; these read LLFL…FVTG, ILIA…LQAA, ANII…MLFI, FYLP…IIVL, VSMI…LEIL, IWSD…LTLL, VFLA…GIIV, VLIP…DLLG, and LEIP…IYLI.

Belongs to the binding-protein-dependent transport system permease family. FecCD subfamily.

It is found in the cell membrane. Its function is as follows. Part of the binding-protein-dependent transport system for heme-iron. Responsible for the translocation of the substrate across the membrane. In Staphylococcus aureus (strain bovine RF122 / ET3-1), this protein is Probable heme-iron transport system permease protein IsdF (isdF).